We begin with the raw amino-acid sequence, 147 residues long: Histone H2B (147 aa).

Residues 1-31 (MAPKAEKKPAEKKPAEEKKAVAEKAPAEKKP) are compositionally biased toward basic and acidic residues. Residues 1–55 (MAPKAEKKPAEKKPAEEKKAVAEKAPAEKKPKAGKKLPKEGGAAAGDKKKKRVKK) form a disordered region. 3 positions are modified to N6-acetyllysine: Lys-7, Lys-35, and Lys-36. Lys-143 participates in a covalent cross-link: Glycyl lysine isopeptide (Lys-Gly) (interchain with G-Cter in ubiquitin).

This sequence belongs to the histone H2B family. The nucleosome is a histone octamer containing two molecules each of H2A, H2B, H3 and H4 assembled in one H3-H4 heterotetramer and two H2A-H2B heterodimers. The octamer wraps approximately 147 bp of DNA. Post-translationally, can be acetylated to form H2BK6ac, H2BK33ac and H2BK34ac. In terms of processing, monoubiquitinated to form H2BK143ub1; may give a specific tag for epigenetic transcriptional activation.

It is found in the nucleus. The protein resides in the chromosome. In terms of biological role, core component of nucleosome. Nucleosomes wrap and compact DNA into chromatin, limiting DNA accessibility to the cellular machineries which require DNA as a template. Histones thereby play a central role in transcription regulation, DNA repair, DNA replication and chromosomal stability. DNA accessibility is regulated via a complex set of post-translational modifications of histones, also called histone code, and nucleosome remodeling. This chain is Histone H2B (HIS2B), found in Gossypium hirsutum (Upland cotton).